Reading from the N-terminus, the 149-residue chain is Transcriptional repressor NrdR (149 aa).

A zinc finger lies at 3–34 (CPFCSENDTKVIDSRLVADGHQVRRRRQCLAC). An ATP-cone domain is found at 49-139 (PKVIKSNGNR…VYRSFEDIRE (91 aa)).

The protein belongs to the NrdR family. It depends on Zn(2+) as a cofactor.

Negatively regulates transcription of bacterial ribonucleotide reductase nrd genes and operons by binding to NrdR-boxes. The protein is Transcriptional repressor NrdR of Vibrio atlanticus (strain LGP32) (Vibrio splendidus (strain Mel32)).